We begin with the raw amino-acid sequence, 273 residues long: Large ribosomal subunit protein uL2 (273 aa).

The tract at residues 228–273 is disordered; that stretch reads IDHPHGGGEGKTSGGRHPVTPWGFSTKGKKTRKNKRTSKFIVKKRK. Over residues 254 to 273 the composition is skewed to basic residues; it reads KGKKTRKNKRTSKFIVKKRK.

Belongs to the universal ribosomal protein uL2 family. Part of the 50S ribosomal subunit. Forms a bridge to the 30S subunit in the 70S ribosome.

One of the primary rRNA binding proteins. Required for association of the 30S and 50S subunits to form the 70S ribosome, for tRNA binding and peptide bond formation. It has been suggested to have peptidyltransferase activity; this is somewhat controversial. Makes several contacts with the 16S rRNA in the 70S ribosome. This is Large ribosomal subunit protein uL2 from Rickettsia typhi (strain ATCC VR-144 / Wilmington).